Consider the following 90-residue polypeptide: uncharacterized protein (90 aa).

3 helical membrane passes run 5-27 (FDIL…IIYI), 40-62 (IYLS…TFVA), and 67-89 (MSVV…YSIV).

It localises to the cell membrane. This is an uncharacterized protein from Archaeoglobus fulgidus (strain ATCC 49558 / DSM 4304 / JCM 9628 / NBRC 100126 / VC-16).